The primary structure comprises 948 residues: Protein translocase subunit SecA (948 aa).

ATP contacts are provided by residues glutamine 91, 109 to 113 (GEGKT), and aspartate 509.

It belongs to the SecA family. As to quaternary structure, monomer and homodimer. Part of the essential Sec protein translocation apparatus which comprises SecA, SecYEG and auxiliary proteins SecDF. Other proteins may also be involved.

It localises to the cell inner membrane. It is found in the cellular thylakoid membrane. The protein resides in the cytoplasm. It catalyses the reaction ATP + H2O + cellular proteinSide 1 = ADP + phosphate + cellular proteinSide 2.. Functionally, part of the Sec protein translocase complex. Interacts with the SecYEG preprotein conducting channel. Has a central role in coupling the hydrolysis of ATP to the transfer of proteins into and across the cell membrane, serving as an ATP-driven molecular motor driving the stepwise translocation of polypeptide chains across the membrane. Probably participates in protein translocation into and across both the cytoplasmic and thylakoid membranes in cyanobacterial cells. This Synechococcus elongatus (strain ATCC 33912 / PCC 7942 / FACHB-805) (Anacystis nidulans R2) protein is Protein translocase subunit SecA.